The following is a 668-amino-acid chain: Endoplasmic reticulum oxidoreductin-1 (668 aa).

The N-terminal stretch at 1–22 (MKPASRLFYLSLFALWSPEAQC) is a signal peptide. 4 disulfide bridges follow: cysteine 79–cysteine 413, cysteine 89–cysteine 94, cysteine 150–cysteine 352, and cysteine 416–cysteine 419. Residues 116–142 (KLEGPRAKHPGKSVQKEEPKRPLQGKL) are disordered. Arginine 186, threonine 188, tryptophan 199, serine 282, and histidine 285 together coordinate FAD. N-linked (GlcNAc...) asparagine glycosylation is found at asparagine 298 and asparagine 307. Residue arginine 314 coordinates FAD. The N-linked (GlcNAc...) asparagine glycan is linked to asparagine 406. Cysteine 416 (nucleophile) is an active-site residue. Cysteine 419 is a catalytic residue. Residue asparagine 443 is glycosylated (N-linked (GlcNAc...) asparagine). 2 disordered regions span residues 488-519 (VEESEEGQQPQSHEQIEGSENSGAHHIPDRAK) and 554-597 (GVTP…DPNF). The span at 494 to 509 (GQQPQSHEQIEGSENS) shows a compositional bias: polar residues. Residues 570–581 (DNNDDDDDDDEF) are compositionally biased toward acidic residues.

The protein belongs to the EROs family. As to quaternary structure, may function both as a monomer and a homodimer. FAD is required as a cofactor.

It is found in the endoplasmic reticulum membrane. Functionally, essential oxidoreductase that oxidizes proteins in the endoplasmic reticulum to produce disulfide bonds. Acts by oxidizing directly pdi1 isomerase through a direct disulfide exchange. Does not act as a direct oxidant of folding substrate, but relies on pdi1 to transfer oxidizing equivalent. Does not oxidize all pdi related proteins, suggesting that it can discriminate between pdi1 and related proteins. Its reoxidation probably involves electron transfer to molecular oxygen via FAD. Acts independently of glutathione. May be responsible for a significant proportion of reactive oxygen species (ROS) in the cell, thereby being a source of oxidative stress. The protein is Endoplasmic reticulum oxidoreductin-1 (ero-1) of Neurospora crassa (strain ATCC 24698 / 74-OR23-1A / CBS 708.71 / DSM 1257 / FGSC 987).